The sequence spans 528 residues: Autophagy-related protein 22 (528 aa).

At 1–98 the chain is on the cytoplasmic side; the sequence is MSYGTINDMN…IFVDTSSFAL (98 aa). A helical membrane pass occupies residues 99–119; it reads YVFSLSVLFQTIIVISVSGIV. At 120-130 the chain is on the vacuolar side; that stretch reads DLWGSVKFKGR. A helical transmembrane segment spans residues 131-151; sequence ILVWFGIVGALSTVAISKLND. The Cytoplasmic segment spans residues 152–153; it reads TQ. A helical membrane pass occupies residues 154-174; that stretch reads IYSLAGLYIVANGCFGVINVV. Residues 175-210 are Vacuolar-facing; sequence GNSLLPIFVKDSLKCQSQGAYEPDKVDSLTTVISGR. A helical membrane pass occupies residues 211 to 231; that stretch reads GASLGYSSALIVQIVSMFLVA. Over 232 to 241 the chain is Cytoplasmic; the sequence is SKKGSKQDVQ. The helical transmembrane segment at 242–262 threads the bilayer; the sequence is VAVLFVGIWWFVWQLPMIWLI. The Vacuolar portion of the chain corresponds to 263-318; the sequence is DDVTIPIRADDSTLASARSPYPGEQDALGQLNWKNYLSYGWVSLFESFKHARLLKD. A Phosphoserine modification is found at serine 278. Residues 319–339 traverse the membrane as a helical segment; the sequence is VMIFLIAWFIISDSITTINST. Residues 340–352 are Cytoplasmic-facing; sequence AVLFSKAELHMST. The helical transmembrane segment at 353-373 threads the bilayer; it reads LNLIMISVLTVVNAMLGAFMI. Residues 374–388 lie on the Vacuolar side of the membrane; sequence PQFLATKFRWTSSQT. The helical transmembrane segment at 389-409 threads the bilayer; the sequence is LMYIIIWASFIPFYGILGFFF. Topologically, residues 410 to 417 are cytoplasmic; the sequence is NAFGLKHK. Residues 418-438 traverse the membrane as a helical segment; sequence FEMFLLAIWYGLSLGGLSAVS. Topologically, residues 439 to 485 are vacuolar; the sequence is RSVFSLIVPPGKESTFFSMFSITDKGSSILGPFLVGLLTDKTHNIRY. The helical transmembrane segment at 486–506 threads the bilayer; it reads SFYFFFLLLMLSLPVLNCLDV. At 507–528 the chain is on the cytoplasmic side; that stretch reads KRGRREAEELSQVLPESERRLD.

Belongs to the ATG22 family.

The protein localises to the vacuole membrane. In terms of biological role, vacuolar effluxer which mediate the efflux of amino acids resulting from autophagic degradation. The release of autophagic amino acids allows the maintenance of protein synthesis and viability during nitrogen starvation. The sequence is that of Autophagy-related protein 22 (ATG22) from Saccharomyces cerevisiae (strain YJM789) (Baker's yeast).